A 291-amino-acid chain; its full sequence is Pituitary-specific positive transcription factor 1 (291 aa).

Residues 5-13 carry the 9aaTAD motif; sequence AFTSADTFI. Residues 124–198 form the POU-specific domain; it reads MDSPEIRELE…ILSKWLEEAE (75 aa). Residues 214-273 constitute a DNA-binding region (homeobox); sequence KRKRRTTISIAAKDALERHFGEQNKPSSQEIMRMAEELNLEKEVVRVWFCNRRQREKRVK.

The protein belongs to the POU transcription factor family. Class-1 subfamily. Interacts with PITX1. Interacts with LHX3. Interacts with ELK1.

It localises to the nucleus. Transcription factor involved in the specification of the lactotrope, somatotrope, and thyrotrope phenotypes in the developing anterior pituitary. Activates growth hormone and prolactin genes. Specifically binds to the consensus sequence 5'-TAAAT-3'. The polypeptide is Pituitary-specific positive transcription factor 1 (POU1F1) (Macaca mulatta (Rhesus macaque)).